The chain runs to 90 residues: Phosphocarrier protein NPr (90 aa).

The region spanning 2-90 (TVKQTVEISN…ALFNAGFDED (89 aa)) is the HPr domain. His16 functions as the Pros-phosphohistidine intermediate in the catalytic mechanism.

It belongs to the HPr family.

The protein resides in the cytoplasm. Component of the phosphoenolpyruvate-dependent nitrogen-metabolic phosphotransferase system (nitrogen-metabolic PTS), that seems to be involved in regulating nitrogen metabolism. The phosphoryl group from phosphoenolpyruvate (PEP) is transferred to the phosphoryl carrier protein NPr by enzyme I-Ntr. Phospho-NPr then transfers it to EIIA-Ntr. Could function in the transcriptional regulation of sigma-54 dependent operons in conjunction with the NPr (PtsO) and EIIA-Ntr (PtsN) proteins. This is Phosphocarrier protein NPr (ptsO) from Klebsiella oxytoca.